Consider the following 219-residue polypeptide: Protein RhiB (219 aa).

Residues 174 to 195 are compositionally biased toward polar residues; sequence AGISQQGNAAGTSISSKSTGSP. Residues 174–201 form a disordered region; sequence AGISQQGNAAGTSISSKSTGSPENPART.

May be involved in plant-microbe interaction. This Rhizobium leguminosarum bv. viciae protein is Protein RhiB (rhiB).